Reading from the N-terminus, the 248-residue chain is Coenzyme F420:L-glutamate ligase (248 aa).

Residues 15–18 (IPLI), 45–46 (ET), and Lys-50 each bind GTP. Residue Asp-115 participates in a divalent metal cation binding. Residue Asn-118 coordinates GTP. Residues Asp-155, Ser-156, and Gln-213 each contribute to the a divalent metal cation site. GTP is bound at residue 211-218 (MGQSDEGI).

It belongs to the CofE family. In terms of assembly, homodimer. Mg(2+) is required as a cofactor. The cofactor is Mn(2+). K(+) serves as cofactor.

It catalyses the reaction oxidized coenzyme F420-0 + GTP + L-glutamate = oxidized coenzyme F420-1 + GDP + phosphate + H(+). It carries out the reaction oxidized coenzyme F420-1 + GTP + L-glutamate = oxidized coenzyme F420-2 + GDP + phosphate + H(+). It functions in the pathway cofactor biosynthesis; coenzyme F420 biosynthesis. Functionally, catalyzes the GTP-dependent successive addition of two or more gamma-linked L-glutamates to the L-lactyl phosphodiester of 7,8-didemethyl-8-hydroxy-5-deazariboflavin (F420-0) to form coenzyme F420-0-glutamyl-glutamate (F420-2) or polyglutamated F420 derivatives. The sequence is that of Coenzyme F420:L-glutamate ligase from Methanococcus maripaludis (strain C6 / ATCC BAA-1332).